The chain runs to 384 residues: Glucans biosynthesis protein C (384 aa).

10 consecutive transmembrane segments (helical) span residues 17–37 (AWLM…THSW), 54–74 (FIHA…SYML), 91–111 (VGIP…ILLQ), 140–160 (LWFL…FTWF), 173–193 (AISL…YAAI), 212–232 (FIVM…LAFI), 240–260 (FTTP…AYLL), 274–294 (TESV…FSLG), 311–331 (ASLF…AYIT), and 338–358 (LIGF…LYEI).

The protein belongs to the acyltransferase 3 family. OpgC subfamily.

The protein localises to the cell membrane. It functions in the pathway glycan metabolism; osmoregulated periplasmic glucan (OPG) biosynthesis. Necessary for the succinyl substitution of periplasmic glucans. Could catalyze the transfer of succinyl residues from the cytoplasmic side of the membrane to the nascent glucan backbones on the periplasmic side of the membrane. This chain is Glucans biosynthesis protein C, found in Salmonella typhimurium (strain LT2 / SGSC1412 / ATCC 700720).